The chain runs to 356 residues: Altered inheritance of mitochondria protein 23, mitochondrial (356 aa).

The N-terminal 32 residues, 1–32 (MLKVPLSDVLSQKMLFLKSFRYFHCTKYFSRD), are a transit peptide targeting the mitochondrion.

It belongs to the AIM23 family.

It is found in the mitochondrion. This Saccharomyces cerevisiae (strain RM11-1a) (Baker's yeast) protein is Altered inheritance of mitochondria protein 23, mitochondrial (AIM23).